Reading from the N-terminus, the 152-residue chain is Lipoprotein signal peptidase (152 aa).

The next 2 membrane-spanning stretches (helical) occupy residues 55 to 75 and 85 to 105; these read NKMW…VFYM and LGIS…DRVF. Catalysis depends on residues aspartate 111 and aspartate 129. The helical transmembrane segment at 124–144 threads the bilayer; sequence VFNIADSALCIGVVLIIIQTL.

The protein belongs to the peptidase A8 family.

It is found in the cell membrane. It carries out the reaction Release of signal peptides from bacterial membrane prolipoproteins. Hydrolyzes -Xaa-Yaa-Zaa-|-(S,diacylglyceryl)Cys-, in which Xaa is hydrophobic (preferably Leu), and Yaa (Ala or Ser) and Zaa (Gly or Ala) have small, neutral side chains.. It participates in protein modification; lipoprotein biosynthesis (signal peptide cleavage). Functionally, this protein specifically catalyzes the removal of signal peptides from prolipoproteins. This chain is Lipoprotein signal peptidase, found in Bacillus cereus (strain ZK / E33L).